A 150-amino-acid polypeptide reads, in one-letter code: Large ribosomal subunit protein bL9 (150 aa).

Belongs to the bacterial ribosomal protein bL9 family.

Binds to the 23S rRNA. This Shewanella baltica (strain OS155 / ATCC BAA-1091) protein is Large ribosomal subunit protein bL9.